A 284-amino-acid polypeptide reads, in one-letter code: Bifunctional protein FolD (284 aa).

NADP(+) is bound by residues 164-166 (GRS) and Ser-189.

The protein belongs to the tetrahydrofolate dehydrogenase/cyclohydrolase family. As to quaternary structure, homodimer.

It carries out the reaction (6R)-5,10-methylene-5,6,7,8-tetrahydrofolate + NADP(+) = (6R)-5,10-methenyltetrahydrofolate + NADPH. The enzyme catalyses (6R)-5,10-methenyltetrahydrofolate + H2O = (6R)-10-formyltetrahydrofolate + H(+). Its pathway is one-carbon metabolism; tetrahydrofolate interconversion. Functionally, catalyzes the oxidation of 5,10-methylenetetrahydrofolate to 5,10-methenyltetrahydrofolate and then the hydrolysis of 5,10-methenyltetrahydrofolate to 10-formyltetrahydrofolate. This chain is Bifunctional protein FolD, found in Listeria welshimeri serovar 6b (strain ATCC 35897 / DSM 20650 / CCUG 15529 / CIP 8149 / NCTC 11857 / SLCC 5334 / V8).